Consider the following 517-residue polypeptide: MATHNKKRLNLKDKYRYLTRDLAWETTYQKKEDVFPLEHFEGIKITDWDKWEDPFRLTMDTYWKYQAEKEKKLYAIFDAFAQNNGHQNISDARYVNALKLFLTAVSPLEYQAFQGFSRVGRQFSGAGARVACQMQAIDELRHVQTQVHAMSHYNKHFDGLHDFAHMYDRVWYLSVPKSYMDDARTAGPFEFLTAVSFSFEYVLTNLLFVPFMSGAAYNGDMATVTFGFSAQSDEARHMTLGLEVIKFMLEQHEDNVPIIQRWIDKWFWRGYRLLTLIGMMMDYMLPNKVMSWSEAWGVYFEQAGGALFKDLERYGIRPPKYVEQTTIGKEHITHQVWGALYQYSKATSFHTWIPGDEELNWLSEKYPDTFDKYYRPRFEFWREQQAKGERFYNDTLPHLCQVCQLPVIFTEPDDPTKLSLRSLVHEGERYQFCSDGCCDIFKNEPVKYIQAWLPVHQIYQGNCEGGDVETVVQKYYHIKSGVDNLEYLGSPEHQRWLALKGQTPPTAAPADKSLGAA.

Fe cation contacts are provided by glutamate 109, glutamate 139, histidine 142, glutamate 200, glutamate 234, and histidine 237.

This sequence belongs to the TmoA/XamoA family. The multicomponent enzyme phenol hydroxylase is formed by DmpL (P1 component), DmpM (P2 component), DmpN (P3 component), DmpO (P4 component) and DmpP (P5 component). The oxygenase component is a dimer composed of three subunits, DmpL, DmpN and DmpO (DmpLNO). DmpN interacts with the auxiliary protein DmpK (P0 component). It depends on Fe(2+) as a cofactor.

It carries out the reaction phenol + NADH + O2 + H(+) = catechol + NAD(+) + H2O. Its pathway is aromatic compound metabolism; phenol degradation. Its activity is regulated as follows. Requires DmpM for efficient turnover. The activity of DmpLNO oxygenase is inhibited by dithiothreitol (DTT) by a mechanism apparently involving H(2)O(2) generation. In terms of biological role, part of a multicomponent enzyme which catalyzes the degradation of phenol and some of its methylated derivatives. DmpL, DmpN and DmpO form the oxygenase component of the complex. Required for growth on phenol and for in vitro phenol hydroxylase activity. This is Phenol 2-monooxygenase, oxygenase component DmpN from Pseudomonas sp. (strain CF600).